Reading from the N-terminus, the 466-residue chain is Rhodanese-like domain-containing protein 4, chloroplastic (466 aa).

A chloroplast-targeting transit peptide spans Met1–Leu15. The tract at residues Met1–Lys35 is disordered. The N-terminal 54 residues, Ser16–Ser69, are a transit peptide targeting the thylakoid. Residues Pro103–Leu123 traverse the membrane as a helical segment. Residues Thr144 to Glu250 form the Rhodanese domain. The helical transmembrane segment at Val277–Ile297 threads the bilayer. The span at Glu373–Val384 shows a compositional bias: low complexity. Disordered regions lie at residues Glu373–Glu392 and Ala426–Pro466. Positions Leu455–Pro466 are enriched in pro residues.

As to quaternary structure, component of high molecular weight thylakoid LFNRs-containing protein complexes containing LIR1, LFNR1, LFNR2, TIC62 and TROL proteins. In terms of tissue distribution, expressed in leaves and stems, and at lower levels in flowers and siliques (at protein level).

It localises to the plastid. The protein resides in the chloroplast envelope. Its subcellular location is the chloroplast thylakoid membrane. In terms of biological role, rhodanese domain-containing protein required for anchoring ferredoxin--NADP reductase to the thylakoid membranes and sustaining efficient linear electron flow (LEF). This is Rhodanese-like domain-containing protein 4, chloroplastic from Arabidopsis thaliana (Mouse-ear cress).